Here is a 331-residue protein sequence, read N- to C-terminus: Anthranilate phosphoribosyltransferase (331 aa).

5-phospho-alpha-D-ribose 1-diphosphate contacts are provided by residues Gly-79, 82-83 (GD), Ser-87, 89-92 (NIST), 107-115 (KHCNGNISS), and Ser-119. Gly-79 lines the anthranilate pocket. Ser-91 serves as a coordination point for Mg(2+). Asn-110 contacts anthranilate. An anthranilate-binding site is contributed by Arg-165. Mg(2+) contacts are provided by Asp-223 and Glu-224.

This sequence belongs to the anthranilate phosphoribosyltransferase family. Homodimer. Mg(2+) is required as a cofactor.

It carries out the reaction N-(5-phospho-beta-D-ribosyl)anthranilate + diphosphate = 5-phospho-alpha-D-ribose 1-diphosphate + anthranilate. It functions in the pathway amino-acid biosynthesis; L-tryptophan biosynthesis; L-tryptophan from chorismate: step 2/5. In terms of biological role, catalyzes the transfer of the phosphoribosyl group of 5-phosphorylribose-1-pyrophosphate (PRPP) to anthranilate to yield N-(5'-phosphoribosyl)-anthranilate (PRA). In Buchnera aphidicola subsp. Baizongia pistaciae (strain Bp), this protein is Anthranilate phosphoribosyltransferase.